The primary structure comprises 3433 residues: Genome polyprotein (3433 aa).

Residues 2 to 15 (SKKPGGPGKSRAVN) form an interaction with host EXOC1 region. At 2–108 (SKKPGGPGKS…SSKQKKRGGK (107 aa)) the chain is on the cytoplasmic side. A hydrophobic; homodimerization of capsid protein C region spans residues 37 to 72 (LIDGKGPIRFVLALLAFFRFTAIAPTRAVLDRWRGV). Positions 106-123 (GGKTGIAVMIGLIASVGA) are cleaved as a propeptide — ER anchor for the capsid protein C, removed in mature form by serine protease NS3. A helical transmembrane segment spans residues 109-129 (TGIAVMIGLIASVGAVTLSNF). Residues 130–248 (QGKVMMTVNA…KATRYLVKTE (119 aa)) lie on the Extracellular side of the membrane. A glycan (N-linked (GlcNAc...) asparagine; by host) is linked at N138. Residues 249–269 (SWILRNPGYALVAAVIGWMLG) traverse the membrane as a helical segment. The Cytoplasmic segment spans residues 270–275 (SNTMQR). A helical transmembrane segment spans residues 276–290 (VVFVVLLLLVAPAYS). Topologically, residues 291–743 (FNCLGMSNRD…QVFGGAFRSL (453 aa)) are extracellular. Intrachain disulfides connect C293–C320, C350–C406, C350–C411, C364–C395, C382–C406, and C382–C411. Residues 388–401 (DRGWGNGCGLFGKG) form a fusion peptide region. A glycan (N-linked (GlcNAc...) asparagine; by host) is linked at N444. 2 cysteine pairs are disulfide-bonded: C480/C578 and C595/C626. A helical membrane pass occupies residues 744 to 764 (FGGMSWITQGLLGALLLWMGI). At 765–770 (NARDRS) the chain is on the cytoplasmic side. Residues 771 to 791 (IALTFLAVGGVLLFLSVNVHA) form a helical membrane-spanning segment. At 792–1216 (DTGCAIDISR…AFAESNSGGD (425 aa)) the chain is on the extracellular side. 2 disulfides stabilise this stretch: C795–C806 and C846–C934. N921, N966, and N998 each carry an N-linked (GlcNAc...) asparagine; by host glycan. Cystine bridges form between C970-C1014, C1071-C1120, C1082-C1103, and C1104-C1107. Residues 1217–1237 (VVHLALMATFKIQPVFMVASF) traverse the membrane as a helical segment. The Cytoplasmic segment spans residues 1238 to 1245 (LKARWTNQ). A helical transmembrane segment spans residues 1246 to 1268 (ENILLMLAAVFFQMAYHDARQIL). The Lumenal portion of the chain corresponds to 1269–1288 (LWEIPDVLNSLAVAWMILRA). Residues 1289-1309 (ITFTTTSNVVVPLLALLTPGL) form a helical membrane-spanning segment. Residues 1310–1313 (RCLN) lie on the Cytoplasmic side of the membrane. Residues 1314 to 1331 (LDVYRILLLMVGIGSLIR) form a helical membrane-spanning segment. Topologically, residues 1332–1345 (EKRSAAAKKKGASL) are lumenal. The chain crosses the membrane as a helical span at residues 1346–1366 (LCLALASTGLFNPMILAAGLI). At 1367–1375 (ACDPNRKRG) the chain is on the cytoplasmic side. Residues 1376–1396 (WPATEVMTAVGLMFAIVGGLA) form a helical membrane-spanning segment. The Lumenal portion of the chain corresponds to 1397 to 1399 (ELD). Residues 1400–1420 (IDSMAIPMTIAGLMFAAFVIS) traverse the membrane as a helical segment. The Cytoplasmic portion of the chain corresponds to 1421–1477 (GKSTDMWIERTADISWESDAEITGSSERVDVRLDDDGNFQLMNDPGAPWKIWMLRMV). Residues 1428–1467 (IERTADISWESDAEITGSSERVDVRLDDDGNFQLMNDPGA) are interacts with and activates NS3 protease. The segment at residues 1478–1498 (CLAISAYTPWAILPSVVGFWI) is an intramembrane region (helical). Residues 1499-2174 (TLQYTKRGGV…RMALEELPDA (676 aa)) lie on the Cytoplasmic side of the membrane. One can recognise a Peptidase S7 domain in the interval 1506 to 1683 (GGVLWDTPSP…ERMDEPIPAG (178 aa)). Active-site charge relay system; for serine protease NS3 activity residues include H1556, D1580, and S1640. The Helicase ATP-binding domain maps to 1686 to 1842 (PEMLRKKQIT…ESNSPISDLQ (157 aa)). The important for RNA-binding stretch occupies residues 1690-1693 (RKKQ). 1699–1706 (LHPGAGKT) provides a ligand contact to ATP. The DEAH box motif lies at 1790–1793 (DEAH). The Helicase C-terminal domain occupies 1853-2018 (GYEWITEYTG…GLIAQFYQPE (166 aa)). At K1894 the chain carries N6-acetyllysine; by host. The regulates the ATPase activity of NS3 helicase stretch occupies residues 2169-2173 (EELPD). A helical membrane pass occupies residues 2175–2195 (LQTIALIALLSVMTMGVFFLL). The Lumenal portion of the chain corresponds to 2196–2200 (MQRKG). The helical intramembrane region spans 2201 to 2221 (IGKIGLGGAVLGVATFFCWMA). Residue E2222 is a topological domain, lumenal. Residues 2223-2243 (VPGTKIAGMLLLSLLLMIVLI) form a helical membrane-spanning segment. The Cytoplasmic segment spans residues 2244 to 2258 (PEPEKQRSQTDNQLA). Residues 2259-2279 (VFLICVMTLVSAVAANEMGWL) form a helical membrane-spanning segment. The Lumenal portion of the chain corresponds to 2280–2312 (DKTKSDISSLFGQRIEVKENFSMGEFLLDLRPA). Positions 2313 to 2333 (TAWSLYAVTTAVLTPLLKHLI) form an intramembrane region, helical. Residues 2334–2380 (TSDYINTSLTSINVQASALFTLARGFPFVDVGVSALLLAAGCWGQVT) are Lumenal-facing. Residues 2381-2401 (LTVTVTAATLLFCHYAYMVPG) traverse the membrane as a helical segment. Residues 2402 to 2444 (WQAEAMRSAQRRTAAGIMKNAVVDGIVATDVPELERTTPIMQK) lie on the Cytoplasmic side of the membrane. A helical transmembrane segment spans residues 2445-2465 (KVGQIMLILVSLAAVVVNPSV). The Lumenal portion of the chain corresponds to 2466–2470 (KTVRE). A helical membrane pass occupies residues 2471–2491 (AGILITAAAVTLWENGASSVW). The Cytoplasmic portion of the chain corresponds to 2492–3433 (NATTAIGLCH…DTTLVEDTVL (942 aa)). Residues 2529 to 2794 (GGAKGRTLGE…DVNLGSGTRA (266 aa)) enclose the mRNA cap 0-1 NS5-type MT domain. Residue S2584 coordinates S-adenosyl-L-methionine. Residue S2584 is modified to Phosphoserine. Residue K2589 is the For 2'-O-MTase activity of the active site. S-adenosyl-L-methionine is bound by residues G2614, W2615, T2632, K2633, E2639, D2659, V2660, D2674, and I2675. The active-site For 2'-O-MTase activity is the D2674. Active-site for 2'-O-MTase activity residues include K2710 and E2746. Position 2748 (Y2748) interacts with S-adenosyl-L-methionine. A Nuclear localization signal motif is present at residues 2917–2919 (REK). Zn(2+) is bound by residues E2968, H2972, C2977, and C2980. Residues 3058-3210 (GKIYADDTAG…KPLDDRFATS (153 aa)) form the RdRp catalytic domain. Zn(2+) contacts are provided by H3245, C3261, and C3380. Positions 3431–3433 (TVL) match the PDZ-binding motif.

In the N-terminal section; belongs to the class I-like SAM-binding methyltransferase superfamily. mRNA cap 0-1 NS5-type methyltransferase family. In terms of assembly, homodimer. Interacts (via N-terminus) with host EXOC1 (via C-terminus); this interaction results in EXOC1 degradation through the proteasome degradation pathway. Interacts with host DDX56; this interaction plays an important role in genomic RNA encapsidation. Forms heterodimers with envelope protein E in the endoplasmic reticulum and Golgi. As to quaternary structure, homodimer; in the endoplasmic reticulum and Golgi. In terms of assembly, homodimer; Homohexamer when secreted. NS1 interacts with NS4B. Interacts with host complement protein CFH; this interaction leads to the degradation of C3. Forms a heterodimer with serine protease NS3. May form homooligomers. Interacts with human SPCS1. As to quaternary structure, forms a heterodimer with NS2B. Interacts with NS4B. Interacts with unphosphorylated RNA-directed RNA polymerase NS5; this interaction stimulates RNA-directed RNA polymerase NS5 guanylyltransferase activity. In terms of assembly, interacts with host RTN3; this interaction is important to remodel host cell membranes. Interacts with Serine protease/Helicase NS3. Interacts with NS1. As to quaternary structure, homodimer. Interacts with host STAT2; this interaction inhibits the phosphorylation of the latter, and, when all viral proteins are present (polyprotein), targets STAT2 for degradation. Post-translationally, specific enzymatic cleavages in vivo yield mature proteins. Cleavages in the lumen of endoplasmic reticulum are performed by host signal peptidase, whereas cleavages in the cytoplasmic side are performed by serine protease NS3. Signal cleavage at the 2K-4B site requires a prior NS3 protease-mediated cleavage at the 4A-2K site. In terms of processing, cleaved in post-Golgi vesicles by a host furin, releasing the mature small envelope protein M, and peptide pr. This cleavage is incomplete as up to 30% of viral particles still carry uncleaved prM. N-glycosylated. Post-translationally, N-glycosylated. The excreted form is glycosylated and this is required for efficient secretion of the protein from infected cells. In terms of processing, acetylated by host KAT5. Acetylation modulates NS3 RNA-binding and unwinding activities and plays an important positive role for viral replication. Phosphorylated on serines residues. This phosphorylation may trigger NS5 nuclear localization.

The protein resides in the virion. It is found in the host nucleus. Its subcellular location is the host cytoplasm. The protein localises to the host perinuclear region. It localises to the secreted. The protein resides in the virion membrane. It is found in the host endoplasmic reticulum membrane. It carries out the reaction Selective hydrolysis of -Xaa-Xaa-|-Yaa- bonds in which each of the Xaa can be either Arg or Lys and Yaa can be either Ser or Ala.. It catalyses the reaction RNA(n) + a ribonucleoside 5'-triphosphate = RNA(n+1) + diphosphate. The catalysed reaction is a ribonucleoside 5'-triphosphate + H2O = a ribonucleoside 5'-diphosphate + phosphate + H(+). The enzyme catalyses ATP + H2O = ADP + phosphate + H(+). It carries out the reaction a 5'-end (5'-triphosphoguanosine)-ribonucleoside in mRNA + S-adenosyl-L-methionine = a 5'-end (N(7)-methyl 5'-triphosphoguanosine)-ribonucleoside in mRNA + S-adenosyl-L-homocysteine. It catalyses the reaction a 5'-end (N(7)-methyl 5'-triphosphoguanosine)-ribonucleoside in mRNA + S-adenosyl-L-methionine = a 5'-end (N(7)-methyl 5'-triphosphoguanosine)-(2'-O-methyl-ribonucleoside) in mRNA + S-adenosyl-L-homocysteine + H(+). Plays a role in virus budding by binding to the cell membrane and gathering the viral RNA into a nucleocapsid that forms the core of a mature virus particle. During virus entry, may induce genome penetration into the host cytoplasm after hemifusion induced by the surface proteins. Can migrate to the cell nucleus where it modulates host functions. Overcomes the anti-viral effects of host EXOC1 by sequestering and degrading the latter through the proteasome degradation pathway. Functionally, inhibits RNA silencing by interfering with host Dicer. In terms of biological role, prevents premature fusion activity of envelope proteins in trans-Golgi by binding to envelope protein E at pH6.0. After virion release in extracellular space, gets dissociated from E dimers. Its function is as follows. Acts as a chaperone for envelope protein E during intracellular virion assembly by masking and inactivating envelope protein E fusion peptide. prM is the only viral peptide matured by host furin in the trans-Golgi network probably to avoid catastrophic activation of the viral fusion activity in acidic Golgi compartment prior to virion release. prM-E cleavage is inefficient, and many virions are only partially matured. These uncleaved prM would play a role in immune evasion. May play a role in virus budding. Exerts cytotoxic effects by activating a mitochondrial apoptotic pathway through M ectodomain. May display a viroporin activity. Functionally, binds to host cell surface receptor and mediates fusion between viral and cellular membranes. Envelope protein is synthesized in the endoplasmic reticulum in the form of heterodimer with protein prM. They play a role in virion budding in the ER, and the newly formed immature particle is covered with 60 spikes composed of heterodimer between precursor prM and envelope protein E. The virion is transported to the Golgi apparatus where the low pH causes dissociation of PrM-E heterodimers and formation of E homodimers. prM-E cleavage is inefficient, and many virions are only partially matured. These uncleaved prM would play a role in immune evasion. In terms of biological role, involved in immune evasion, pathogenesis and viral replication. Once cleaved off the polyprotein, is targeted to three destinations: the viral replication cycle, the plasma membrane and the extracellular compartment. Essential for viral replication. Required for formation of the replication complex and recruitment of other non-structural proteins to the ER-derived membrane structures. Excreted as a hexameric lipoparticle that plays a role against host immune response. Antagonizing the complement function. Binds to the host macrophages and dendritic cells. Inhibits signal transduction originating from Toll-like receptor 3 (TLR3). Its function is as follows. Component of the viral RNA replication complex that functions in virion assembly and antagonizes the host alpha/beta interferon antiviral response. Required cofactor for the serine protease function of NS3. May have membrane-destabilizing activity and form viroporins. Functionally, displays three enzymatic activities: serine protease, NTPase and RNA helicase. NS3 serine protease, in association with NS2B, performs its autocleavage and cleaves the polyprotein at dibasic sites in the cytoplasm: C-prM, NS2A-NS2B, NS2B-NS3, NS3-NS4A, NS4A-2K and NS4B-NS5. NS3 RNA helicase binds RNA and unwinds dsRNA in the 3' to 5' direction. NS3 supports the separation of RNA daughter and template strands during viral replication. The helicase part is involved in the inhibition of phosphorylation of host STAT1, and thereby inhibition of host type-I IFN signaling. In addition, NS3 assists the initiation of replication by unwinding the RNA secondary structure in the 3' non-translated region (NTR). Inhibits STAT2 translocation in the nucleus after IFN-alpha treatment. In terms of biological role, facilitates host membrane remodelling necessary for viral replication by interacting with host RTN3. Regulates the ATPase activity of the NS3 helicase activity. NS4A allows NS3 helicase to conserve energy during unwinding. Its function is as follows. Functions as a signal peptide for NS4B and is required for the interferon antagonism activity of the latter. Induces the formation of ER-derived membrane vesicles where the viral replication takes place. Inhibits interferon (IFN)-induced host STAT1 phosphorylation and nuclear translocation, thereby preventing the establishment of cellular antiviral state by blocking the IFN-alpha/beta pathway. Inhibits STAT2 translocation in the nucleus after IFN-alpha treatment. Functionally, replicates the viral (+) and (-) genome, and performs the capping of genomes in the cytoplasm. NS5 methylates viral RNA cap at guanine N-7 and ribose 2'-O positions. Besides its role in RNA genome replication, also prevents the establishment of cellular antiviral state by blocking the interferon-alpha/beta (IFN-alpha/beta) signaling pathway. Inhibits host JAK1 and TYK2 phosphorylation, thereby preventing activation of JAK-STAT signaling pathway. This chain is Genome polyprotein, found in Aedes (Tropical bont tick).